A 176-amino-acid chain; its full sequence is Large ribosomal subunit protein uL16 (176 aa).

This sequence belongs to the universal ribosomal protein uL16 family.

The chain is Large ribosomal subunit protein uL16 from Halobacterium salinarum (strain ATCC 29341 / DSM 671 / R1).